The primary structure comprises 368 residues: Glutaminyl-peptide cyclotransferase (368 aa).

Positions 1 to 23 (MAGERRDSKAAAFFCLAWALCLA) are cleaved as a signal peptide. Asn-53 is a glycosylation site (N-linked (GlcNAc...) asparagine). A disulfide bond links Cys-143 and Cys-169. Residue Asp-164 coordinates Zn(2+). Glu-207 (proton acceptor) is an active-site residue. Glu-208 serves as a coordination point for Zn(2+). Asp-254 acts as the Proton acceptor in catalysis. An N-linked (GlcNAc...) asparagine glycan is attached at Asn-292. His-336 is a binding site for Zn(2+). Residue Asn-352 is glycosylated (N-linked (GlcNAc...) asparagine).

It belongs to the glutaminyl-peptide cyclotransferase family. In terms of tissue distribution, expressed by the venom gland.

It is found in the secreted. The catalysed reaction is N-terminal L-glutaminyl-[peptide] = N-terminal 5-oxo-L-prolyl-[peptide] + NH4(+). Its function is as follows. Responsible for the biosynthesis of pyroglutamyl peptides. Has a bias against acidic and tryptophan residues adjacent to the N-terminal glutaminyl residue and a lack of importance of chain length after the second residue. Also catalyzes N-terminal pyroglutamate formation. The chain is Glutaminyl-peptide cyclotransferase (QPCT) from Boiga dendrophila (Mangrove snake).